We begin with the raw amino-acid sequence, 246 residues long: Exosome complex component Rrp41 (246 aa).

This sequence belongs to the RNase PH family. Rrp41 subfamily. As to quaternary structure, component of the archaeal exosome complex. Forms a hexameric ring-like arrangement composed of 3 Rrp41-Rrp42 heterodimers. The hexameric ring associates with a trimer of Rrp4 and/or Csl4 subunits.

The protein resides in the cytoplasm. Catalytic component of the exosome, which is a complex involved in RNA degradation. Has 3'-&gt;5' exoribonuclease activity. Can also synthesize heteromeric RNA-tails. This chain is Exosome complex component Rrp41, found in Pyrobaculum neutrophilum (strain DSM 2338 / JCM 9278 / NBRC 100436 / V24Sta) (Thermoproteus neutrophilus).